We begin with the raw amino-acid sequence, 489 residues long: Beta-galactosidase (489 aa).

Residue Lys116 is modified to N6-methyllysine; partial. Lys135 carries the post-translational modification N6-methyllysine. The active-site Proton donor is Glu206. An N6-methyllysine; partial mark is found at Lys273 and Lys311. Lys332 bears the N6-methyllysine mark. The active-site Nucleophile is the Glu387.

In terms of assembly, homotetramer.

The catalysed reaction is Hydrolysis of terminal non-reducing beta-D-galactose residues in beta-D-galactosides.. In Saccharolobus solfataricus (strain ATCC 35092 / DSM 1617 / JCM 11322 / P2) (Sulfolobus solfataricus), this protein is Beta-galactosidase (lacS).